Reading from the N-terminus, the 427-residue chain is Gamma-glutamyl phosphate reductase (427 aa).

The protein belongs to the gamma-glutamyl phosphate reductase family.

It localises to the cytoplasm. The enzyme catalyses L-glutamate 5-semialdehyde + phosphate + NADP(+) = L-glutamyl 5-phosphate + NADPH + H(+). Its pathway is amino-acid biosynthesis; L-proline biosynthesis; L-glutamate 5-semialdehyde from L-glutamate: step 2/2. In terms of biological role, catalyzes the NADPH-dependent reduction of L-glutamate 5-phosphate into L-glutamate 5-semialdehyde and phosphate. The product spontaneously undergoes cyclization to form 1-pyrroline-5-carboxylate. The polypeptide is Gamma-glutamyl phosphate reductase (Sinorhizobium medicae (strain WSM419) (Ensifer medicae)).